Reading from the N-terminus, the 57-residue chain is Sperm histone (57 aa).

The tract at residues 1–57 is disordered; sequence MARYRRTRTRSRSRRRRRSRRRRSSRRRRYGRSRRSYRSVGRRRRRYGRRRRRRRRY. A Phosphothreonine modification is found at threonine 9.

Belongs to the protamine P1 family. In terms of tissue distribution, testis.

It is found in the nucleus. The protein localises to the chromosome. Protamines substitute for histones in the chromatin of sperm during the haploid phase of spermatogenesis. They compact sperm DNA into a highly condensed, stable and inactive complex. This chain is Sperm histone, found in Coturnix japonica (Japanese quail).